Here is an 802-residue protein sequence, read N- to C-terminus: Penicillin G acylase (802 aa).

The signal sequence occupies residues 1 to 26 (MKMKWLISVIILFVFIFPQNLVFAGE). Glutamate 177 serves as a coordination point for Ca(2+). Positions 235–265 (SAVIKASEKVGKERENFVQSSEELGLPLKIG) are cleaved as a propeptide — spacer peptide. Residue serine 266 is the Nucleophile of the active site. Residue aspartate 341 participates in Ca(2+) binding.

The protein belongs to the peptidase S45 family. As to quaternary structure, heterodimer of an alpha subunit and a beta subunit processed from the same precursor. Ca(2+) serves as cofactor.

It is found in the secreted. It carries out the reaction a penicillin + H2O = 6-aminopenicillanate + a carboxylate. The sequence is that of Penicillin G acylase (pac) from Rhizobium viscosum (Arthrobacter viscosus).